The following is a 124-amino-acid chain: Urease subunit beta (124 aa).

The protein belongs to the urease beta subunit family. As to quaternary structure, heterotrimer of UreA (gamma), UreB (beta) and UreC (alpha) subunits. Three heterotrimers associate to form the active enzyme.

Its subcellular location is the cytoplasm. It catalyses the reaction urea + 2 H2O + H(+) = hydrogencarbonate + 2 NH4(+). Its pathway is nitrogen metabolism; urea degradation; CO(2) and NH(3) from urea (urease route): step 1/1. The protein is Urease subunit beta of Bacillus velezensis (strain DSM 23117 / BGSC 10A6 / LMG 26770 / FZB42) (Bacillus amyloliquefaciens subsp. plantarum).